The following is an 891-amino-acid chain: Alanine--tRNA ligase (891 aa).

H564, H568, C678, and H682 together coordinate Zn(2+).

The protein belongs to the class-II aminoacyl-tRNA synthetase family. Zn(2+) is required as a cofactor.

It is found in the cytoplasm. The enzyme catalyses tRNA(Ala) + L-alanine + ATP = L-alanyl-tRNA(Ala) + AMP + diphosphate. Its function is as follows. Catalyzes the attachment of alanine to tRNA(Ala) in a two-step reaction: alanine is first activated by ATP to form Ala-AMP and then transferred to the acceptor end of tRNA(Ala). Also edits incorrectly charged Ser-tRNA(Ala) and Gly-tRNA(Ala) via its editing domain. This chain is Alanine--tRNA ligase, found in Nitrobacter winogradskyi (strain ATCC 25391 / DSM 10237 / CIP 104748 / NCIMB 11846 / Nb-255).